Consider the following 351-residue polypeptide: Probable dual-specificity RNA methyltransferase RlmN (351 aa).

E102 functions as the Proton acceptor in the catalytic mechanism. The Radical SAM core domain maps to 110–339 (DGGRKTICIS…ILNRRSPGKD (230 aa)). An intrachain disulfide couples C117 to C344. [4Fe-4S] cluster-binding residues include C124, C128, and C131. S-adenosyl-L-methionine contacts are provided by residues 171–172 (GE), S203, 226–228 (SLN), and N302. The active-site S-methylcysteine intermediate is C344.

This sequence belongs to the radical SAM superfamily. RlmN family. It depends on [4Fe-4S] cluster as a cofactor.

Its subcellular location is the cytoplasm. The catalysed reaction is adenosine(2503) in 23S rRNA + 2 reduced [2Fe-2S]-[ferredoxin] + 2 S-adenosyl-L-methionine = 2-methyladenosine(2503) in 23S rRNA + 5'-deoxyadenosine + L-methionine + 2 oxidized [2Fe-2S]-[ferredoxin] + S-adenosyl-L-homocysteine. The enzyme catalyses adenosine(37) in tRNA + 2 reduced [2Fe-2S]-[ferredoxin] + 2 S-adenosyl-L-methionine = 2-methyladenosine(37) in tRNA + 5'-deoxyadenosine + L-methionine + 2 oxidized [2Fe-2S]-[ferredoxin] + S-adenosyl-L-homocysteine. Specifically methylates position 2 of adenine 2503 in 23S rRNA and position 2 of adenine 37 in tRNAs. This Leptospira borgpetersenii serovar Hardjo-bovis (strain JB197) protein is Probable dual-specificity RNA methyltransferase RlmN.